The following is a 254-amino-acid chain: DNA repair protein RecO (254 aa).

The protein belongs to the RecO family.

Functionally, involved in DNA repair and RecF pathway recombination. The chain is DNA repair protein RecO from Rhodopseudomonas palustris (strain BisB18).